The following is a 107-amino-acid chain: U1-lycotoxin-Ls1p (107 aa).

Positions 1-20 (MMKVLVVVALLVTLISYSSS) are cleaved as a signal peptide. Positions 21–41 (EGIDDLEADELLSLMANEQTR) are excised as a propeptide. 4 cysteine pairs are disulfide-bonded: Cys44–Cys59, Cys51–Cys68, Cys58–Cys86, and Cys70–Cys84.

This sequence belongs to the neurotoxin 19 (CSTX) family. 04 (U1-Lctx) subfamily. In terms of tissue distribution, expressed by the venom gland.

It is found in the secreted. This is U1-lycotoxin-Ls1p from Lycosa singoriensis (Wolf spider).